The sequence spans 727 residues: Pentatricopeptide repeat-containing protein At2g33680 (727 aa).

17 PPR repeats span residues 13 to 47, 48 to 78, 79 to 116, 117 to 150, 152 to 182, 183 to 213, 220 to 254, 255 to 285, 286 to 320, 321 to 355, 356 to 386, 387 to 421, 422 to 456, 457 to 487, 488 to 522, 523 to 553, and 559 to 593; these read HTSTLLKKLTHHSQQRNLVAGRAVHGQIIRTGAST, CIQHANVLVNFYAKCGKLAKAHSIFNAIICK, DVVSWNSLITGYSQNGGISSSYTVMQLFREMRAQDILP, NAYTLAGIFKAESSLQSSTVGRQAHALVVKMSSF, DIYVDTSLVGMYCKAGLVEDGLKVFAYMPER, NTYTWSTMVSGYATRGRVEEAIKVFNLFLRE, SDYVFTAVLSSLAATIYVGLGRQIHCITIKNGLLG, FVALSNALVTMYSKCESLNEACKMFDSSGDR, NSITWSAMVTGYSQNGESLEAVKLFSRMFSAGIKP, SEYTIVGVLNACSDICYLEEGKQLHSFLLKLGFER, HLFATTALVDMYAKAGCLADARKGFDCLQER, DVALWTSLISGYVQNSDNEEALILYRRMKTAGIIP, NDPTMASVLKACSSLATLELGKQVHGHTIKHGFGL, EVPIGSALSTMYSKCGSLEDGNLVFRRTPNK, DVVSWNAMISGLSHNGQGDEALELFEEMLAEGMEP, DDVTFVNIISACSHKGFVERGWFYFNMMSDQ, and KVDHYACMVDLLSRAGQLKEAKEFIESANIDHGLC. The interval 594–669 is type E motif; the sequence is LWRILLSACK…EVGCSWIELK (76 aa). A type E(+) motif region spans residues 670 to 700; the sequence is NQYHVFVVGDTMHPMIEETKDLVCLVSRQMI.

Belongs to the PPR family. PCMP-E subfamily.

This Arabidopsis thaliana (Mouse-ear cress) protein is Pentatricopeptide repeat-containing protein At2g33680 (PCMP-E19).